The sequence spans 384 residues: Anhydro-N-acetylmuramic acid kinase (384 aa).

An ATP-binding site is contributed by 9 to 16; it reads GTSADGVD.

This sequence belongs to the anhydro-N-acetylmuramic acid kinase family.

It carries out the reaction 1,6-anhydro-N-acetyl-beta-muramate + ATP + H2O = N-acetyl-D-muramate 6-phosphate + ADP + H(+). The protein operates within amino-sugar metabolism; 1,6-anhydro-N-acetylmuramate degradation. It participates in cell wall biogenesis; peptidoglycan recycling. Catalyzes the specific phosphorylation of 1,6-anhydro-N-acetylmuramic acid (anhMurNAc) with the simultaneous cleavage of the 1,6-anhydro ring, generating MurNAc-6-P. Is required for the utilization of anhMurNAc either imported from the medium or derived from its own cell wall murein, and thus plays a role in cell wall recycling. The chain is Anhydro-N-acetylmuramic acid kinase from Synechococcus sp. (strain CC9311).